A 153-amino-acid polypeptide reads, in one-letter code: 3-hydroxyacyl-[acyl-carrier-protein] dehydratase FabZ (153 aa).

Residue His-57 is part of the active site.

Belongs to the thioester dehydratase family. FabZ subfamily.

The protein localises to the cytoplasm. It carries out the reaction a (3R)-hydroxyacyl-[ACP] = a (2E)-enoyl-[ACP] + H2O. Its function is as follows. Involved in unsaturated fatty acids biosynthesis. Catalyzes the dehydration of short chain beta-hydroxyacyl-ACPs and long chain saturated and unsaturated beta-hydroxyacyl-ACPs. This Aeromonas hydrophila subsp. hydrophila (strain ATCC 7966 / DSM 30187 / BCRC 13018 / CCUG 14551 / JCM 1027 / KCTC 2358 / NCIMB 9240 / NCTC 8049) protein is 3-hydroxyacyl-[acyl-carrier-protein] dehydratase FabZ.